Here is a 362-residue protein sequence, read N- to C-terminus: F-box protein At2g14710 (362 aa).

Positions 1 to 47 (MAHLKNLPWELIEEILSRVPPKSLVRFRTVSKQWNALFDDKTFINNH) constitute an F-box domain.

The chain is F-box protein At2g14710 from Arabidopsis thaliana (Mouse-ear cress).